Reading from the N-terminus, the 710-residue chain is MFSAFIIKRSAILCSLAMFIPLASIADDTIEVTAKAGHEADLPTSGYTATTTKGATKTDQPLILTAQSVSVVTRQQMDDQNVATVNQALNYTPGVFTGFSGGATRYDTVALRGFHGGDVNNTFLDGLRLLSDGGSYNVLQVDPWFLERIDVIKGPSSALYGQSIPGGVVMMTSKRPQFTSEGHFRLTAGNNNTQVAAFDYTDAISEHWAFRLTGITRNSDTMYDHQREERYAIAPSLLWQPDENTSLLLRANLQKDPSGGYHSAVPADGSIYGQKLSRGFFDGESNHNVFKRWQQIYSYEFSHKFDDVWSFRQNASYTHSNTQLEQVYQGGWNSDRTLMNRYYSGEDSSLNAFAVDNQLEADLRTAAVKHKVLLGVDFQKFRNNLRSDSAYATPLNPYTGVSGGSTLYSDYLLTTPGINTSYLSRRYEQSGVYLQDEMTLDNWHLNLSGRYDRMKTENINNTANSTDERTDNHASGRASLLYSFDSGISPYVSYSQAITPSLFPDAQQKLLKPMTSEQYEVGIIYQPPGSTSLYSAALYDLTQNDVANRAVPATYYVPAGKVNSQGLELEARSQISDRLSVIAGYTYNRVKFKDAIDGNDGNTPVLAPSNMASLWAQYEAGYGINVGAGIRYIGKQWADDANTLRVPSYTLGDASVRADLGTWAASLKGAFVQLNVNNIADKKYVAACYSTSYCYWGAERSVQATVGYDF.

Residues Met-1–Ala-26 form the signal peptide. The short motif at Asp-28–Lys-35 is the TonB box element. Transmembrane regions (beta stranded) follow at residues Thr-29–Gly-37, Thr-65–Thr-73, Tyr-91–Phe-99, Tyr-106–Phe-114, Asn-137–Phe-145, Ile-152–Tyr-160, Ser-180–Ala-188, Gln-194–Asp-202, Trp-208–Thr-216, Gly-259–Ala-267, Ile-271–Gly-279, Trp-293–Phe-301, Trp-309–Tyr-317, Phe-353–Ala-361, His-370–Phe-378, Tyr-427–Gln-435, Trp-443–Tyr-451, Gly-476–Phe-484, Tyr-491–Thr-499, Glu-517–Tyr-525, Thr-531–Tyr-539, Tyr-555–Asn-563, Leu-567–Ile-575, Leu-579–Tyr-587, Asn-610–Tyr-618, Ile-624–Tyr-632, Tyr-649–Arg-657, Phe-671–Ile-679, Tyr-684–Ser-692, and Val-702–Phe-710. Positions Pro-61–Lys-174 constitute a TBDR plug domain. In terms of domain architecture, TBDR beta-barrel spans Glu-181–Phe-710. Positions Tyr-693 to Phe-710 match the TonB C-terminal box motif.

The protein belongs to the TonB-dependent receptor family.

The protein resides in the cell outer membrane. In terms of biological role, ferrioxamine binding and uptake, in association with the TonB protein. The polypeptide is Ferrioxamine receptor (foxA) (Yersinia enterocolitica).